Reading from the N-terminus, the 432-residue chain is Alpha-enolase (432 aa).

Ser40 is a binding site for Mg(2+). Residues His158 and Glu167 each coordinate substrate. Catalysis depends on Glu210, which acts as the Proton donor. 3 residues coordinate Mg(2+): Asp245, Glu293, and Asp318. Substrate-binding residues include Glu293 and Asp318. The Proton acceptor role is filled by Lys343. Substrate contacts are provided by residues 370–373 (SHRS) and Lys394.

Belongs to the enolase family. Dimer. The cofactor is Mg(2+).

Its subcellular location is the cytoplasm. The enzyme catalyses (2R)-2-phosphoglycerate = phosphoenolpyruvate + H2O. The protein operates within carbohydrate degradation; glycolysis; pyruvate from D-glyceraldehyde 3-phosphate: step 4/5. Multifunctional enzyme that, as well as its role in glycolysis, plays a part in various processes such as growth control, hypoxia tolerance and allergic responses. The polypeptide is Alpha-enolase (Thunnus albacares (Yellowfin tuna)).